A 246-amino-acid polypeptide reads, in one-letter code: UDP-N-acetyl-D-mannosaminuronic acid transferase (246 aa).

The protein belongs to the glycosyltransferase 26 family.

It carries out the reaction UDP-N-acetyl-alpha-D-mannosaminouronate + N-acetyl-alpha-D-glucosaminyl-di-trans,octa-cis-undecaprenyl diphosphate = beta-D-ManNAcA-(1-&gt;4)-alpha-D-GlcNAc-di-trans,octa-cis-undecaprenyl diphosphate + UDP + H(+). The protein operates within bacterial outer membrane biogenesis; enterobacterial common antigen biosynthesis. Functionally, catalyzes the synthesis of Und-PP-GlcNAc-ManNAcA (Lipid II), the second lipid-linked intermediate involved in enterobacterial common antigen (ECA) synthesis. This Klebsiella pneumoniae (strain 342) protein is UDP-N-acetyl-D-mannosaminuronic acid transferase.